A 291-amino-acid chain; its full sequence is Protein ZAR1-like (291 aa).

Positions 103 to 152 (GSQTLHSSSLSDRTSSRKPTEAWEVGRRALIRRPQDGEDEESQEELTGPT) are disordered. Over residues 106 to 115 (TLHSSSLSDR) the composition is skewed to low complexity. Residues 116-129 (TSSRKPTEAWEVGR) are compositionally biased toward basic and acidic residues. A 3CxxC-type zinc finger spans residues 195–280 (LKYGYFHCKD…QELCGHCKDK (86 aa)).

Belongs to the ZAR1 family. In terms of assembly, interacts with YBX2. As to expression, expressed in oocytes and zygotes. Predominantly expressed in maturing oocytes before maternal-to-zygotic transition (MZT). Less abundant than Zar1.

It localises to the cytoplasm. It is found in the cytoplasmic ribonucleoprotein granule. In terms of biological role, mRNA-binding protein required for maternal mRNA storage, translation and degradation during oocyte maturation. Probably promotes formation of some phase-separated membraneless compartment that stores maternal mRNAs in oocytes: acts by undergoing liquid-liquid phase separation upon binding to maternal mRNAs. Binds to the 3'-UTR of maternal mRNAs, inhibiting their translation. This Mus musculus (Mouse) protein is Protein ZAR1-like.